Here is a 309-residue protein sequence, read N- to C-terminus: Probable manganese-dependent inorganic pyrophosphatase (309 aa).

The Mn(2+) site is built by His9, Asp13, Asp15, Asp75, His97, and Asp149.

This sequence belongs to the PPase class C family. Mn(2+) is required as a cofactor.

Its subcellular location is the cytoplasm. It catalyses the reaction diphosphate + H2O = 2 phosphate + H(+). The polypeptide is Probable manganese-dependent inorganic pyrophosphatase (Staphylococcus epidermidis (strain ATCC 12228 / FDA PCI 1200)).